The primary structure comprises 327 residues: Malate dehydrogenase (327 aa).

12-18 contributes to the NAD(+) binding site; the sequence is GAAGQIG. Substrate-binding residues include arginine 93 and arginine 99. Residues asparagine 106, glutamine 113, and 130–132 each bind NAD(+); that span reads VGN. Substrate is bound by residues asparagine 132 and arginine 163. The active-site Proton acceptor is histidine 188.

Belongs to the LDH/MDH superfamily. MDH type 2 family.

The catalysed reaction is (S)-malate + NAD(+) = oxaloacetate + NADH + H(+). Catalyzes the reversible oxidation of malate to oxaloacetate. The protein is Malate dehydrogenase of Paraburkholderia phymatum (strain DSM 17167 / CIP 108236 / LMG 21445 / STM815) (Burkholderia phymatum).